The primary structure comprises 504 residues: Probable ergothioneine transporter EgtUBC (504 aa).

Positions 19–198 constitute an ABC transmembrane type-1 domain; it reads MIEHIQISFI…LLAIIFDLIL (180 aa). 6 consecutive transmembrane segments (helical) span residues 25 to 45, 49 to 69, 70 to 90, 145 to 165, 178 to 198, and 209 to 229; these read ISFIALLIATAIAVPLGILLT, TISEIVMNIAAILQTIPSLAL, LGLMIPLFGIGRVPAIIALVV, AMVLIIGTATLAALIGAGGLG, SLILLGAIPAALLAIIFDLIL, and LLMTLGVIVMIIILAIAIPMF. The ergothioneine binding domain stretch occupies residues 231-504; it reads QKGDKITLAG…DYLKAKGLIK (274 aa).

This sequence in the N-terminal section; belongs to the binding-protein-dependent transport system permease family. It in the C-terminal section; belongs to the OsmX family. The complex is probably composed of at least an ATP-binding protein (EgtUA) and a transmembrane protein (EgtUBC).

It localises to the membrane. Functionally, part of an ABC transporter complex EgtU required for the uptake of ergothioneine (EGT), a natural low-molecular weight (LMW) thiol antioxidant. Responsible for the translocation of the substrate across the membrane. Also contains a C-terminal periplasmic solute-binding domain (SBD) which binds to EGT with sub-micromolar affinity. Probably does not bind L-hercynine. This Staphylococcus aureus (strain USA300) protein is Probable ergothioneine transporter EgtUBC (egtUBC).